We begin with the raw amino-acid sequence, 176 residues long: Ribosome maturation factor RimM (176 aa).

The PRC barrel domain maps to 97–176 (DNDFYHRDLI…QIVVDWDPDF (80 aa)).

This sequence belongs to the RimM family. In terms of assembly, binds ribosomal protein uS19.

The protein resides in the cytoplasm. An accessory protein needed during the final step in the assembly of 30S ribosomal subunit, possibly for assembly of the head region. Essential for efficient processing of 16S rRNA. May be needed both before and after RbfA during the maturation of 16S rRNA. It has affinity for free ribosomal 30S subunits but not for 70S ribosomes. This is Ribosome maturation factor RimM from Shewanella denitrificans (strain OS217 / ATCC BAA-1090 / DSM 15013).